Reading from the N-terminus, the 216-residue chain is Thymidine kinase (216 aa).

ATP contacts are provided by residues 9-16 and 86-89; these read GPMDSGKS and DEAQ. The Proton acceptor role is filled by glutamate 87.

This sequence belongs to the thymidine kinase family. Homotetramer.

The protein resides in the cytoplasm. The enzyme catalyses thymidine + ATP = dTMP + ADP + H(+). In Cutibacterium acnes (strain DSM 16379 / KPA171202) (Propionibacterium acnes), this protein is Thymidine kinase.